The following is a 473-amino-acid chain: Argininosuccinate lyase (473 aa).

This sequence belongs to the lyase 1 family. Argininosuccinate lyase subfamily.

Its subcellular location is the cytoplasm. It carries out the reaction 2-(N(omega)-L-arginino)succinate = fumarate + L-arginine. Its pathway is amino-acid biosynthesis; L-arginine biosynthesis; L-arginine from L-ornithine and carbamoyl phosphate: step 3/3. In Nocardia farcinica (strain IFM 10152), this protein is Argininosuccinate lyase.